An 80-amino-acid chain; its full sequence is DNA-binding protein HU-like (80 aa).

The protein belongs to the bacterial histone-like protein family.

Its function is as follows. Histone-like DNA-binding protein which is capable of wrapping DNA to stabilize it, and thus to prevent its denaturation under extreme environmental conditions. This chain is DNA-binding protein HU-like, found in Rickettsia prowazekii (strain Madrid E).